The primary structure comprises 732 residues: uncharacterized protein (732 aa).

It belongs to the mimivirus L137 family.

This is an uncharacterized protein from Acanthamoeba polyphaga mimivirus (APMV).